A 120-amino-acid chain; its full sequence is UPF0231 protein Spro_4007 (120 aa).

It belongs to the UPF0231 family.

The polypeptide is UPF0231 protein Spro_4007 (Serratia proteamaculans (strain 568)).